Here is a 424-residue protein sequence, read N- to C-terminus: UPF0597 protein Shewmr7_2876 (424 aa).

Belongs to the UPF0597 family.

In Shewanella sp. (strain MR-7), this protein is UPF0597 protein Shewmr7_2876.